The following is a 418-amino-acid chain: Gamma-glutamyl phosphate reductase (418 aa).

Belongs to the gamma-glutamyl phosphate reductase family.

Its subcellular location is the cytoplasm. The enzyme catalyses L-glutamate 5-semialdehyde + phosphate + NADP(+) = L-glutamyl 5-phosphate + NADPH + H(+). It functions in the pathway amino-acid biosynthesis; L-proline biosynthesis; L-glutamate 5-semialdehyde from L-glutamate: step 2/2. Its function is as follows. Catalyzes the NADPH-dependent reduction of L-glutamate 5-phosphate into L-glutamate 5-semialdehyde and phosphate. The product spontaneously undergoes cyclization to form 1-pyrroline-5-carboxylate. The sequence is that of Gamma-glutamyl phosphate reductase from Citrifermentans bemidjiense (strain ATCC BAA-1014 / DSM 16622 / JCM 12645 / Bem) (Geobacter bemidjiensis).